A 488-amino-acid chain; its full sequence is E3 ubiquitin-protein ligase TRIM34 (488 aa).

Residues Cys-15–Gly-60 form an RING-type zinc finger. The segment at Lys-92–Glu-134 adopts a B box-type zinc-finger fold. Zn(2+) contacts are provided by Cys-97, His-100, Cys-119, and His-125. Residues Val-131–Cys-239 adopt a coiled-coil conformation. The region spanning Leu-283 to Ser-488 is the B30.2/SPRY domain.

Belongs to the TRIM/RBCC family. As to quaternary structure, homotrimer. Interacts (via B-box and SPRY domain) with TRIM5. In terms of assembly, (Microbial infection) Interacts (via the B30.2/SPRY domain) with HIV-1 capsid complexes. Is the most abundant form. It is highly expressed in the placenta, spleen, colon and peripheral blood leukocytes.

The protein resides in the cytoplasm. It localises to the mitochondrion. The enzyme catalyses S-ubiquitinyl-[E2 ubiquitin-conjugating enzyme]-L-cysteine + [acceptor protein]-L-lysine = [E2 ubiquitin-conjugating enzyme]-L-cysteine + N(6)-ubiquitinyl-[acceptor protein]-L-lysine.. The protein operates within protein modification; protein ubiquitination. In terms of biological role, functions as antiviral protein and contributes to the defense against retroviral infections. Acts as a capsid-specific restriction factor with the help of TRIM5 and prevents infection from non-host-adapted retroviruses. During influenza A virus infection, promotes programmed cell death by targeting ZBP1 for 'Lys-63'-linked polyubiquitination. In turn, promotes ZBP1 recruitment of RIPK3 to mediate virus-induced programmed necrosis. Negatively regulates the function of mitochondria by enhancing mitochondrial depolarization leading to cytochrome c release and mitochondria-dependent apoptosis. Also promotes the formation of multinucleated giant cells by means of cell fusion and phagocytosis in epithelial cells. This Homo sapiens (Human) protein is E3 ubiquitin-protein ligase TRIM34 (TRIM34).